The primary structure comprises 532 residues: Cilia- and flagella-associated protein 97 (532 aa).

Phosphoserine is present on Ser-19. 5 disordered regions span residues 28–83 (ETNS…PVEN), 116–263 (IPNR…TPDI), 306–333 (KAAK…SLDH), 398–421 (LSRQ…PPKL), and 485–532 (GQYS…TAWL). The segment covering 35–49 (KQNDDPKERIDKDTK) has biased composition (basic and acidic residues). The span at 50–63 (NVNSNTGMQTTENY) shows a compositional bias: polar residues. A compositionally biased stretch (basic and acidic residues) spans 67 to 82 (KGNERNVKFPPEHPVE). The span at 127–139 (GEDDYYTDGEESS) shows a compositional bias: acidic residues. Thr-133 carries the phosphothreonine modification. Ser-138 and Ser-139 each carry phosphoserine. Composition is skewed to low complexity over residues 170–185 (SSSS…SGSG) and 194–205 (DSHLSDSSPSSK). Ser-218 carries the phosphoserine modification. A compositionally biased stretch (polar residues) spans 227–239 (IKSTETQPSSTTP). Phosphoserine is present on Ser-248. The segment covering 253–263 (TDVSPLSTPDI) has biased composition (polar residues). Low complexity predominate over residues 320-329 (SSKSSSVLDS). Ser-330 is subject to Phosphoserine. Residues 374–450 (GKNYSFTREE…ALLKRLEAVK (77 aa)) adopt a coiled-coil conformation. Positions 493–503 (SRTSSATSGLS) are enriched in polar residues.

This sequence belongs to the CFAP97 family.

The protein is Cilia- and flagella-associated protein 97 of Homo sapiens (Human).